Consider the following 241-residue polypeptide: Uridylate kinase (241 aa).

Residue Lys-15–Gly-18 coordinates ATP. The interval Gly-23 to Gly-28 is involved in allosteric activation by GTP. UMP is bound at residue Gly-57. 2 residues coordinate ATP: Gly-58 and Arg-62. Residues Asp-77 and Thr-138–Thr-145 contribute to the UMP site. Positions 165, 171, and 174 each coordinate ATP.

It belongs to the UMP kinase family. Homohexamer.

Its subcellular location is the cytoplasm. The catalysed reaction is UMP + ATP = UDP + ADP. It functions in the pathway pyrimidine metabolism; CTP biosynthesis via de novo pathway; UDP from UMP (UMPK route): step 1/1. Its activity is regulated as follows. Allosterically activated by GTP. Inhibited by UTP. In terms of biological role, catalyzes the reversible phosphorylation of UMP to UDP. This Pectobacterium atrosepticum (strain SCRI 1043 / ATCC BAA-672) (Erwinia carotovora subsp. atroseptica) protein is Uridylate kinase.